The following is a 217-amino-acid chain: Ribonuclease T (217 aa).

Residues 20 to 195 (VVVDVETAGF…YDTEKTAELF (176 aa)) form the Exonuclease domain. Positions 23, 25, 182, and 187 each coordinate Mg(2+). His182 functions as the Proton donor/acceptor in the catalytic mechanism.

The protein belongs to the RNase T family. Homodimer. Requires Mg(2+) as cofactor.

Functionally, trims short 3' overhangs of a variety of RNA species, leaving a one or two nucleotide 3' overhang. Responsible for the end-turnover of tRNA: specifically removes the terminal AMP residue from uncharged tRNA (tRNA-C-C-A). Also appears to be involved in tRNA biosynthesis. This chain is Ribonuclease T, found in Vibrio vulnificus (strain YJ016).